A 66-amino-acid polypeptide reads, in one-letter code: Large ribosomal subunit protein bL33c (66 aa).

This sequence belongs to the bacterial ribosomal protein bL33 family.

Its subcellular location is the plastid. It is found in the chloroplast. This chain is Large ribosomal subunit protein bL33c, found in Morus indica (Mulberry).